The chain runs to 221 residues: 7-carboxy-7-deazaguanine synthase (221 aa).

Substrate is bound by residues 12–14 and arginine 27; that span reads ING. The Radical SAM core domain occupies 18-216; it reads KSGQLSVFIR…IQIHKIIWNP (199 aa). Residues cysteine 31, cysteine 35, and cysteine 38 each contribute to the [4Fe-4S] cluster site. Residue threonine 40 participates in Mg(2+) binding. Threonine 73 lines the substrate pocket. Glycine 75 is a binding site for S-adenosyl-L-methionine.

It belongs to the radical SAM superfamily. 7-carboxy-7-deazaguanine synthase family. Homodimer. [4Fe-4S] cluster serves as cofactor. It depends on S-adenosyl-L-methionine as a cofactor. Requires Mg(2+) as cofactor.

The enzyme catalyses 6-carboxy-5,6,7,8-tetrahydropterin + H(+) = 7-carboxy-7-deazaguanine + NH4(+). It participates in purine metabolism; 7-cyano-7-deazaguanine biosynthesis. Catalyzes the complex heterocyclic radical-mediated conversion of 6-carboxy-5,6,7,8-tetrahydropterin (CPH4) to 7-carboxy-7-deazaguanine (CDG), a step common to the biosynthetic pathways of all 7-deazapurine-containing compounds. This is 7-carboxy-7-deazaguanine synthase from Clostridium acetobutylicum (strain ATCC 824 / DSM 792 / JCM 1419 / IAM 19013 / LMG 5710 / NBRC 13948 / NRRL B-527 / VKM B-1787 / 2291 / W).